We begin with the raw amino-acid sequence, 71 residues long: Small ribosomal subunit protein bS21 (71 aa).

The protein belongs to the bacterial ribosomal protein bS21 family.

The sequence is that of Small ribosomal subunit protein bS21 from Alteromonas mediterranea (strain DSM 17117 / CIP 110805 / LMG 28347 / Deep ecotype).